We begin with the raw amino-acid sequence, 200 residues long: ATP synthase subunit s, mitochondrial (200 aa).

Residues Met1–Tyr25 constitute a mitochondrion transit peptide. The N-terminal domain stretch occupies residues Met1 to Lys61. Gly59 provides a ligand contact to Mg(2+). LRR repeat units follow at residues Val62–Ile87, Gln88–Leu116, Cys117–Leu141, and Glu142–Leu173. Mg(2+) is bound at residue Thr93.

This sequence belongs to the ATP synthase subunit s family. As to quaternary structure, homotetramer. Associates with ATP synthase.

Its subcellular location is the mitochondrion. The protein localises to the mitochondrion inner membrane. Involved in regulation of mitochondrial membrane ATP synthase. Necessary for H(+) conduction of ATP synthase. Facilitates energy-driven catalysis of ATP synthesis by blocking a proton leak through an alternative proton exit pathway. The protein is ATP synthase subunit s, mitochondrial of Rattus norvegicus (Rat).